The following is a 287-amino-acid chain: Bifunctional protein FolD (287 aa).

Residues Gly-160–Ser-162, Ser-189, and Ile-230 each bind NADP(+).

This sequence belongs to the tetrahydrofolate dehydrogenase/cyclohydrolase family. In terms of assembly, homodimer.

The enzyme catalyses (6R)-5,10-methylene-5,6,7,8-tetrahydrofolate + NADP(+) = (6R)-5,10-methenyltetrahydrofolate + NADPH. The catalysed reaction is (6R)-5,10-methenyltetrahydrofolate + H2O = (6R)-10-formyltetrahydrofolate + H(+). It participates in one-carbon metabolism; tetrahydrofolate interconversion. Functionally, catalyzes the oxidation of 5,10-methylenetetrahydrofolate to 5,10-methenyltetrahydrofolate and then the hydrolysis of 5,10-methenyltetrahydrofolate to 10-formyltetrahydrofolate. This chain is Bifunctional protein FolD, found in Chlamydia felis (strain Fe/C-56) (Chlamydophila felis).